The sequence spans 700 residues: Elongation factor G (700 aa).

Positions 10-286 (KKVRNIGIMA…AVIDYLPSPL (277 aa)) constitute a tr-type G domain. GTP contacts are provided by residues 19 to 26 (AHIDAGKT), 83 to 87 (DTPGH), and 137 to 140 (NKMD).

It belongs to the TRAFAC class translation factor GTPase superfamily. Classic translation factor GTPase family. EF-G/EF-2 subfamily.

The protein localises to the cytoplasm. Catalyzes the GTP-dependent ribosomal translocation step during translation elongation. During this step, the ribosome changes from the pre-translocational (PRE) to the post-translocational (POST) state as the newly formed A-site-bound peptidyl-tRNA and P-site-bound deacylated tRNA move to the P and E sites, respectively. Catalyzes the coordinated movement of the two tRNA molecules, the mRNA and conformational changes in the ribosome. The polypeptide is Elongation factor G (Nocardia farcinica (strain IFM 10152)).